The chain runs to 958 residues: UPF0182 protein TW644 (958 aa).

Transmembrane regions (helical) follow at residues 14–34 (IAILSVVAFLVLIALTAFFLV), 59–79 (IFVVFCLAFVFVSIFLWLCMF), 107–127 (KIVVLLVSLGLGAVAGIFAAS), 166–186 (LFFLLVTFVLGGILSILISVV), 205–225 (VQYAVLAAGIFVLLGLEFWLN), 249–269 (LIPGFAVLALVALGVALLFCI), and 280–300 (IIGVALAVVSALVVITALPWG).

This sequence belongs to the UPF0182 family.

The protein resides in the cell membrane. This chain is UPF0182 protein TW644, found in Tropheryma whipplei (strain TW08/27) (Whipple's bacillus).